The following is a 273-amino-acid chain: Glutamate racemase (273 aa).

Residues 7 to 8 and 39 to 40 contribute to the substrate site; these read DS and YG. C70 functions as the Proton donor/acceptor in the catalytic mechanism. Residue 71–72 participates in substrate binding; the sequence is NT. C194 serves as the catalytic Proton donor/acceptor. Substrate is bound at residue 195–196; that stretch reads TH.

The protein belongs to the aspartate/glutamate racemases family.

The catalysed reaction is L-glutamate = D-glutamate. It functions in the pathway cell wall biogenesis; peptidoglycan biosynthesis. Functionally, provides the (R)-glutamate required for cell wall biosynthesis. This chain is Glutamate racemase, found in Dinoroseobacter shibae (strain DSM 16493 / NCIMB 14021 / DFL 12).